A 684-amino-acid polypeptide reads, in one-letter code: MSAIPAEESDQLLIRPLGAGQEVGRSCIILEFKGRKIMLDCGIHPGLEGMDALPYIDLIDPAEIDLLLISHFHLDHCGALPWFLQKTSFKGRTFMTHATKAIYRWLLSDYVKVSNISADDMLYTETDLEESMDKIETINFHEVKEVAGIKFWCYHAGHVLGAAMFMIEIAGVKLLYTGDFSRQEDRHLMAAEIPNIKPDILIIESTYGTHIHEKREEREARFCNTVHDIVNRGGRGLIPVFALGRAQELLLILDEYWQNHPELHDIPIYYASSLAKKCMAVYQTYVNAMNDKIRKQININNPFVFKHISNLKSMDHFDDIGPSVVMASPGMMQSGLSRELFESWCTDKRNGVIIAGYCVEGTLAKHIMSEPEEITTMSGQKLPLKMSVDYISFSAHTDYQQTSEFIRALKPPHVILVHGEQNEMARLKAALIREYEDNDEVHIEVHNPRNTEAVTLNFRGEKLAKVMGFLADKKPEQGQRVSGILVKRNFNYHILSPCDLSNYTDLAMSTVKQTQAIPYTGPFNLLCYQLQKLTGDVEELEIQEKPALKVFKNITVIQEPGMVVLEWLANPSNDMYADTVTTVILEVQSNPKIRKGAVQKVSKKLEMHVYSKRLEIMLQDIFGEDCVSVKDDSILSVTVDGKTANLNLETRTVECEEGSEDDESLREMVELAAQRLYEALTPVH.

Ser-2 carries the N-acetylserine modification. His-71, His-73, Asp-75, His-76, His-158, and Asp-179 together coordinate Zn(2+). Residue His-396 is the Proton donor of the active site. His-418 contacts Zn(2+). Residues Lys-462, Lys-465, and Lys-545 each participate in a glycyl lysine isopeptide (Lys-Gly) (interchain with G-Cter in SUMO) cross-link. Ser-659 is modified (phosphoserine). Residue Thr-681 is modified to Phosphothreonine.

This sequence belongs to the metallo-beta-lactamase superfamily. RNA-metabolizing metallo-beta-lactamase-like family. CPSF3 subfamily. In terms of assembly, component of the cleavage and polyadenylation specificity factor (CPSF) complex, composed of CPSF1, CPSF2, CPSF3, CPSF4 and FIP1L1. Interacts with CPSF2, CSTF2 and SYMPK. Interacts with TUT1; the interaction is direct and mediates the recruitment of the CPSF complex on the 3'UTR of pre-mRNAs. Interacts with WDR33. Interacts with ZC3H3. Zn(2+) serves as cofactor. In terms of processing, sumoylated on Lys-462, Lys-465 and Lys-545, preferentially by SUMO3.

It localises to the nucleus. Functionally, component of the cleavage and polyadenylation specificity factor (CPSF) complex that plays a key role in pre-mRNA 3'-end formation, recognizing the AAUAAA signal sequence and interacting with poly(A) polymerase and other factors to bring about cleavage and poly(A) addition. Has endonuclease activity, and functions as an mRNA 3'-end-processing endonuclease. Also involved in the histone 3'-end pre-mRNA processing. U7 snRNP-dependent protein that induces both the 3'-endoribonucleolytic cleavage of histone pre-mRNAs and acts as a 5' to 3' exonuclease for degrading the subsequent downstream cleavage product (DCP) of mature histone mRNAs. Cleavage occurs after the 5'-ACCCA-3' sequence in the histone pre-mRNA leaving a 3'hydroxyl group on the upstream fragment containing the stem loop (SL) and 5' phosphate on the downstream cleavage product (DCP) starting with CU nucleotides. The U7-dependent 5' to 3' exonuclease activity is processive and degrades the DCP RNA substrate even after complete removal of the U7-binding site. Binds to the downstream cleavage product (DCP) of histone pre-mRNAs and the cleaved DCP RNA substrate in a U7 snRNP dependent manner. Required for entering/progressing through S-phase of the cell cycle. Required for the selective processing of microRNAs (miRNAs) during embryonic stem cell differentiation via its interaction with ISY1. Required for the biogenesis of all miRNAs from the pri-miR-17-92 primary transcript except miR-92a. Only required for the biogenesis of miR-290 and miR-96 from the pri-miR-290-295 and pri-miR-96-183 primary transcripts, respectively. The sequence is that of Cleavage and polyadenylation specificity factor subunit 3 (CPSF3) from Homo sapiens (Human).